We begin with the raw amino-acid sequence, 443 residues long: F-box only protein 39 (443 aa).

In terms of domain architecture, F-box spans 16–61 (WATLPDVCLRRVFWWLGDRDRSRAALVCRKWNQMMYSADLWRYRTI).

Directly interacts with SKP1 and CUL1.

Substrate-recognition component of the SCF (SKP1-CUL1-F-box protein)-type E3 ubiquitin ligase complex. This is F-box only protein 39 (FBXO39) from Bos taurus (Bovine).